We begin with the raw amino-acid sequence, 1486 residues long: MIERGKFRSLTLINWNGFFARTFDLDELVTTLSGGNGAGKSTTMAAFVTALIPDLTLLHFRNTTEAGATSGSRDKGLHGKLKAGVCYSMLDTINSRHQRVVVGVRLQQVAGRDRKVDIKPFAIQGLPMSVQPTQLVTETLNERQARVLPLNELKDKLEAMEGVQFKQFNSITDYHSLMFDLGIIARRLRSASDRSKFYRLIEASLYGGISSAITRSLRDYLLPENSGVRKAFQDMEAALRENRMTLEAIRVTQSDRDLFKHLISEATNYVAADYMRHANERRVHLDKALEFRRELHTSRQQLAAEQYKHVDMARELAEHNGAEGDLEADYQAASDHLNLVQTALRQQEKIERYEADLDELQIRLEEQNEVVAEAIERQEENEARAEAAELEVDELKSQLADYQQALDVQQTRAIQYNQAIAALNRAKELCHLPDLTADSAAEWLETFQAKELEATEKMLSLEQKMSMAQTAHSQFEQAYQLVVAINGPLARNEAWDVARELLREGVDQRHLAEQVQPLRMRLSELEQRLREQQEAERLLADFCKRQGKNFDIDELEALHQELEARIASLSDSVSNAREERMALRQEQEQLQSRIQSLMQRAPVWLAAQNSLNQLSEQCGEEFTSSQDVTEFLQQLLEREREAIVERDEVGARKNAVDEEIERLSQPGGSEDQRLNALAERFGGVLLSEIYDDVSLEDAPYFSALYGPSRHAIVVPDLSQVTEHLEGLTDCPEDLYLIEGDPQSFDDSVFSVDELEKAVVVKIADRQWRYSRFPEVPLFGRAARESRIESLHAEREVLSERFATLSFDVQKIQRLHQAFSRFIGSHLAVAFESDPEAEIRQLNSRRVELERALSNHENDNQQQRIQFEQAKEGVTALNRILPRLNLLADDSLADRVDEIRERLDEAQEAARFVQQFGNQLAKLEPIVSVLQSDPEQFEQLKEDYAYSQQMQRDARQQAFALTEVVQRRAHFSYSDSAEMLSGNSDLNEKLRERLEQAEAERTRAREALRGHAAQLNQYNQVLASLKSSYDTKKELLNDLQRELQDIGVRADSGAEERARIRRDELHAQLSNNRSRRNQLEKALTFCEAEMDNLTRKLRKLERDYFEMREQVVTAKAGWCAVMRMVKDNGVERRLHRRELAYLSADDLRSMSDKALGALRLAVADNEHLRDVLRMSEDPKRPERKIQFFVAVYQHLRERIRQDIIRTDDPVEAIEQMEIELSRLTEELTSREQKLAISSRSVANIIRKTIQREQNRIRMLNQGLQNVSFGQVNSVRLNVNVRETHAMLLDVLSEQHEQHQDLFNSNRLTFSEALAKLYQRLNPQIDMGQRTPQTIGEELLDYRNYLEMEVEVNRGSDGWLRAESGALSTGEAIGTGMSILVMVVQSWEDESRRLRGKDISPCRLLFLDEAARLDARSIATLFELCERLQMQLIIAAPENISPEKGTTYKLVRKVFQNTEHVHVVGLRGFAPQLPETLPGSDEAPSQAS.

34-41 (GGNGAGKS) contributes to the ATP binding site. Coiled-coil stretches lie at residues 326 to 418 (LEAD…QYNQ), 444 to 480 (LETF…QAYQ), and 509 to 603 (RHLA…RAPV). Residues 666-783 (PGGSEDQRLN…EVPLFGRAAR (118 aa)) form a flexible hinge region. Coiled coils occupy residues 835 to 923 (EAEI…AKLE), 977 to 1115 (EMLS…TAKA), and 1209 to 1266 (VEAI…QNVS).

The protein belongs to the SMC family. MukB subfamily. Homodimerization via its hinge domain. Binds to DNA via its C-terminal region. Interacts, and probably forms a ternary complex, with MukE and MukF via its C-terminal region. The complex formation is stimulated by calcium or magnesium. Interacts with tubulin-related protein FtsZ.

Its subcellular location is the cytoplasm. It is found in the nucleoid. Its function is as follows. Plays a central role in chromosome condensation, segregation and cell cycle progression. Functions as a homodimer, which is essential for chromosome partition. Involved in negative DNA supercoiling in vivo, and by this means organize and compact chromosomes. May achieve or facilitate chromosome segregation by condensation DNA from both sides of a centrally located replisome during cell division. This is Chromosome partition protein MukB from Escherichia coli O127:H6 (strain E2348/69 / EPEC).